Consider the following 928-residue polypeptide: Diacylglycerol kinase zeta (928 aa).

Basic and acidic residues predominate over residues 1–14; that stretch reads MEPRDGSPEARSSD. Disordered regions lie at residues 1–46 and 59–82; these read MEPR…RRFP and KSGL…SERQ. A compositionally biased stretch (low complexity) spans 15–24; the sequence is SESASASSSG. Residues 25-37 show a composition bias toward basic and acidic residues; sequence SERDAGPEPDKAP. 2 consecutive Phorbol-ester/DAG-type zinc fingers follow at residues 98 to 152 and 172 to 230; these read HIWF…NFRC and HHWV…EEPC. The disordered stretch occupies residues 251 to 280; sequence PQNTLKASKKKKRASFKRKSSKKGPEEGRW. The segment covering 257–272 has biased composition (basic residues); that stretch reads ASKKKKRASFKRKSSK. The interval 259 to 273 is MARCKS homology; sequence KKKKRASFKRKSSKK. A mediates interaction with RASGRP1 region spans residues 278–416; the sequence is GRWRPFIIRP…HVEEGNVVQL (139 aa). The DAGKc domain maps to 291 to 425; the sequence is PLMKPLLVFV…LDRWDLHAEP (135 aa). The Nuclear export signal signature appears at 361–369; it reads LSTLDQLRL. S705 carries the phosphoserine modification. The interval 759–788 is disordered; sequence ARPDLPTPTSPLPTSPCSPTPRSLQGDAAP. Residues 763 to 777 are compositionally biased toward pro residues; the sequence is LPTPTSPLPTSPCSP. S781 is subject to Phosphoserine. 2 ANK repeats span residues 822 to 852 and 857 to 886; these read QSRT…EILD and NGET…SLMK. The PDZ-binding motif lies at 924–928; sequence QETAV.

Belongs to the eukaryotic diacylglycerol kinase family. As to quaternary structure, interacts (via PDZ-binding motif) with the PDZ domain of the syntrophin SNTG1 and that of SNX27. Interacts with IRS1 in the absence of insulin; insulin stimulation decreases this interaction. Found in a ternary complex with IRS1 and PIP5K1A in the absence of insulin. Interacts with PIP5K1A. In terms of assembly, forms a signaling complex with RASGRP1 and HRAS. In terms of processing, phosphorylation of the MARCKS homology domain by PKC reduces nuclear accumulation of DGK-zeta. In terms of tissue distribution, highest levels in brain, and substantial levels in skeletal muscle, heart, and pancreas. Predominantly expressed in muscle.

It is found in the nucleus. It localises to the cytoplasm. The protein resides in the cytosol. The protein localises to the cell membrane. Its subcellular location is the cell projection. It is found in the lamellipodium. It catalyses the reaction a 1,2-diacyl-sn-glycerol + ATP = a 1,2-diacyl-sn-glycero-3-phosphate + ADP + H(+). The catalysed reaction is a 1-O-alkyl-sn-glycerol + ATP = a 1-O-alkyl-sn-glycero-3-phosphate + ADP + H(+). It carries out the reaction 1-O-alkyl-2-acyl-sn-glycerol + ATP = 1-O-alkyl-2-acyl-sn-glycero-3-phosphate + ADP + H(+). The enzyme catalyses 1,2-didecanoyl-sn-glycerol + ATP = 1,2-didecanoyl-sn-glycero-3-phosphate + ADP + H(+). It catalyses the reaction 1,2-ditetradecanoyl-sn-glycerol + ATP = 1,2-ditetradecanoyl-sn-glycero-3-phosphate + ADP + H(+). The catalysed reaction is 1-hexadecanoyl-2-(9Z-octadecenoyl)-sn-glycerol + ATP = 1-hexadecanoyl-2-(9Z-octadecenoyl)-sn-glycero-3-phosphate + ADP + H(+). It carries out the reaction 1-hexadecanoyl-2-(5Z,8Z,11Z,14Z-eicosatetraenoyl)-sn-glycerol + ATP = 1-hexadecanoyl-2-(5Z,8Z,11Z,14Z-eicosatetraenoyl)-sn-glycero-3-phosphate + ADP + H(+). The enzyme catalyses 1-octadecanoyl-2-(9Z-octadecenoyl)-sn-glycerol + ATP = 1-octadecanoyl-2-(9Z-octadecenoyl)-sn-glycero-3-phosphate + ADP + H(+). It catalyses the reaction 1-octadecanoyl-2-(5Z,8Z,11Z,14Z-eicosatetraenoyl)-sn-glycerol + ATP = 1-octadecanoyl-2-(5Z,8Z,11Z,14Z-eicosatetraenoyl)-sn-glycero-3-phosphate + ADP + H(+). The catalysed reaction is 1-octadecanoyl-2-(4Z,7Z,10Z,13Z,16Z,19Z-docosahexaenoyl)-sn-glycerol + ATP = 1-octadecanoyl-2-(4Z,7Z,10Z,13Z,16Z,19Z-docosahexaenoyl)-sn-glycero-3-phosphate + ADP + H(+). It carries out the reaction 1,2-di-(9Z-octadecenoyl)-sn-glycerol + ATP = 1,2-di-(9Z-octadecenoyl)-sn-glycero-3-phosphate + ADP + H(+). The enzyme catalyses 1-(9Z-octadecenoyl)-2-hexadecanoyl-sn-glycerol + ATP = 1-(9Z)-octadecenoyl-2-hexadecanoyl-sn-glycero-3-phosphate + ADP + H(+). It catalyses the reaction 1-eicosanoyl-2-(5Z,8Z,11Z,14Z)-eicosatetraenoyl-sn-glycerol + ATP = 1-eicosanoyl-2-(5Z,8Z,11Z,14Z)-eicosatetraenoyl-sn-glycero-3-phosphate + ADP + H(+). The catalysed reaction is 1,2-di-(5Z,8Z,11Z,14Z)-eicosatetraenoyl-sn-glycerol + ATP = 1,2-di-(5Z,8Z,11Z,14Z)-eicosatetraenoyl-sn-glycero-3-phosphate + ADP + H(+). It carries out the reaction 1-O-hexadecyl-2-acetyl-sn-glycerol + ATP = 1-O-hexadecyl-2-acetyl-sn-glycero-3-phosphate + ADP + H(+). The enzyme catalyses 1-O-hexadecyl-2-(5Z,8Z,11Z,14Z-eicosatetraenoyl)-sn-glycerol + ATP = 1-O-hexadecyl-2-(5Z,8Z,11Z,14Z-eicosatetraenoyl)-sn-glycero-3-phosphate + ADP + H(+). It catalyses the reaction 1-O-hexadecyl-2-(9Z-octadecenoyl)-sn-glycerol + ATP = 1-O-hexadecyl-2-(9Z-octadecenoyl)-sn-glycero-3-phosphate + ADP + H(+). The catalysed reaction is 1-O-hexadecyl-sn-glycerol + ATP = 1-O-hexadecyl-sn-glycero-3-phosphate + ADP + H(+). Its pathway is lipid metabolism; glycerolipid metabolism. Activated by 1,2-diacyl-sn-glycero-3-phosphate/phosphatidic acid irrespective of its acyl chain composition. Functionally, diacylglycerol kinase that converts diacylglycerol/DAG into phosphatidic acid/phosphatidate/PA and regulates the respective levels of these two bioactive lipids. Thereby, acts as a central switch between the signaling pathways activated by these second messengers with different cellular targets and opposite effects in numerous biological processes. Also plays an important role in the biosynthesis of complex lipids. Does not exhibit an acyl chain-dependent substrate specificity among diacylglycerol species. Can also phosphorylate 1-alkyl-2-acylglycerol in vitro but less efficiently and with a preference for alkylacylglycerols containing an arachidonoyl group. The biological processes it is involved in include T cell activation since it negatively regulates T-cell receptor signaling which is in part mediated by diacylglycerol. By generating phosphatidic acid, stimulates PIP5KIA activity which regulates actin polymerization. Through the same mechanism could also positively regulate insulin-induced translocation of SLC2A4 to the cell membrane. In terms of biological role, regulates RASGRP1 activity. Does not regulate RASGRP1 activity. This Homo sapiens (Human) protein is Diacylglycerol kinase zeta.